Consider the following 88-residue polypeptide: Small ribosomal subunit protein uS15c (88 aa).

It belongs to the universal ribosomal protein uS15 family. As to quaternary structure, part of the 30S ribosomal subunit.

It localises to the plastid. The protein localises to the chloroplast. This chain is Small ribosomal subunit protein uS15c (rps15), found in Nasturtium officinale (Watercress).